The sequence spans 153 residues: Aspartate carbamoyltransferase regulatory chain (153 aa).

Cysteine 109, cysteine 114, cysteine 138, and cysteine 141 together coordinate Zn(2+).

It belongs to the PyrI family. In terms of assembly, contains catalytic and regulatory chains. Requires Zn(2+) as cofactor.

Involved in allosteric regulation of aspartate carbamoyltransferase. The protein is Aspartate carbamoyltransferase regulatory chain of Salmonella arizonae (strain ATCC BAA-731 / CDC346-86 / RSK2980).